We begin with the raw amino-acid sequence, 462 residues long: Tubulin alpha-4 chain (462 aa).

GTP-binding residues include Gln11, Glu82, Ser151, Gly155, Thr156, Thr190, Asn217, and Asn239. Glu82 serves as a coordination point for Mg(2+). Residue Glu265 is part of the active site.

It belongs to the tubulin family. Dimer of alpha and beta chains. A typical microtubule is a hollow water-filled tube with an outer diameter of 25 nm and an inner diameter of 15 nM. Alpha-beta heterodimers associate head-to-tail to form protofilaments running lengthwise along the microtubule wall with the beta-tubulin subunit facing the microtubule plus end conferring a structural polarity. Microtubules usually have 13 protofilaments but different protofilament numbers can be found in some organisms and specialized cells. Mg(2+) is required as a cofactor.

It localises to the cytoplasm. The protein resides in the cytoskeleton. It catalyses the reaction GTP + H2O = GDP + phosphate + H(+). Its function is as follows. Tubulin is the major constituent of microtubules, a cylinder consisting of laterally associated linear protofilaments composed of alpha- and beta-tubulin heterodimers. Microtubules grow by the addition of GTP-tubulin dimers to the microtubule end, where a stabilizing cap forms. Below the cap, tubulin dimers are in GDP-bound state, owing to GTPase activity of alpha-tubulin. The sequence is that of Tubulin alpha-4 chain (alphaTub67C) from Drosophila melanogaster (Fruit fly).